The chain runs to 349 residues: MLLVRNSTLGRLSSLRGFFRNINESNIFYRMVHHKVTIIGSGPAAHTAAIYLARAEIKPTLYEGFMANGIAAGGQLTTTTEIENFPGFPDGLTGSELMDRMKAQSIKFGTDVITETVSKVDLSSRPFKFWTEFNEDQEPETTDAIILSTGASAKRLHLPGEETYWQQGISACAVCDGAVPIFRNKPLAVIGGGDSACEEAQFLTKYGSKVYMLVRKDHLRASQIMQRRAEQNEKIEILYNHVTLEAKGDGKYLNALKVKNVKTNEEYDLPVNGLFYAIGHTPATNIVAGQVDLDEAGYVKTVPGSTLTNVPGVFAAGDVQDARYRQAITSAGSGCMAALDAEKYITELE.

Residues 1–30 (MLLVRNSTLGRLSSLRGFFRNINESNIFYR) constitute a mitochondrion transit peptide. Residues 41–44 (SGPA), 70–71 (IA), Gln75, Asn84, Val117, Cys175, Asp318, and 325–327 (RQA) each bind FAD. Residues Cys172 and Cys175 are joined by a disulfide bond.

It belongs to the class-II pyridine nucleotide-disulfide oxidoreductase family. As to quaternary structure, homodimer. It depends on FAD as a cofactor.

It localises to the mitochondrion. It carries out the reaction [thioredoxin]-dithiol + NADP(+) = [thioredoxin]-disulfide + NADPH + H(+). This is Thioredoxin reductase, mitochondrial (TRR1) from Kluyveromyces lactis (strain ATCC 8585 / CBS 2359 / DSM 70799 / NBRC 1267 / NRRL Y-1140 / WM37) (Yeast).